A 354-amino-acid chain; its full sequence is Protein RecA (354 aa).

67–74 contacts ATP; it reads GPESSGKT. Residues 333–354 form a disordered region; sequence MNEFVPSSEEQAEASLSEDHDQ.

This sequence belongs to the RecA family.

It localises to the cytoplasm. Functionally, can catalyze the hydrolysis of ATP in the presence of single-stranded DNA, the ATP-dependent uptake of single-stranded DNA by duplex DNA, and the ATP-dependent hybridization of homologous single-stranded DNAs. It interacts with LexA causing its activation and leading to its autocatalytic cleavage. This is Protein RecA from Laribacter hongkongensis (strain HLHK9).